Consider the following 313-residue polypeptide: Porphobilinogen deaminase (313 aa).

Cys241 carries the S-(dipyrrolylmethanemethyl)cysteine modification.

The protein belongs to the HMBS family. In terms of assembly, monomer. Dipyrromethane serves as cofactor.

It catalyses the reaction 4 porphobilinogen + H2O = hydroxymethylbilane + 4 NH4(+). It participates in porphyrin-containing compound metabolism; protoporphyrin-IX biosynthesis; coproporphyrinogen-III from 5-aminolevulinate: step 2/4. The protein operates within porphyrin-containing compound metabolism; chlorophyll biosynthesis. Its function is as follows. Tetrapolymerization of the monopyrrole PBG into the hydroxymethylbilane pre-uroporphyrinogen in several discrete steps. This is Porphobilinogen deaminase from Chlorobium phaeobacteroides (strain BS1).